Consider the following 235-residue polypeptide: Matrix protein (235 aa).

The protein belongs to the nucleorhabdovirus type-2 matrix protein family. As to quaternary structure, homomultimer. Interacts with nucleoprotein and with the cytoplasmic domain of glycoprotein.

It localises to the virion membrane. Its subcellular location is the host endomembrane system. Functionally, plays a major role in assembly and budding of virion. Completely covers the ribonucleoprotein coil and keep it in condensed bullet-shaped form. Inhibits viral transcription and stimulates replication. This Rottboellia (Sorghum) protein is Matrix protein (M).